A 605-amino-acid chain; its full sequence is Elongation factor 4 (605 aa).

A tr-type G domain is found at Lys11 to Arg193. Residues Asp23 to Thr28 and Asn140 to Asp143 each bind GTP.

The protein belongs to the TRAFAC class translation factor GTPase superfamily. Classic translation factor GTPase family. LepA subfamily.

It is found in the cell membrane. It catalyses the reaction GTP + H2O = GDP + phosphate + H(+). In terms of biological role, required for accurate and efficient protein synthesis under certain stress conditions. May act as a fidelity factor of the translation reaction, by catalyzing a one-codon backward translocation of tRNAs on improperly translocated ribosomes. Back-translocation proceeds from a post-translocation (POST) complex to a pre-translocation (PRE) complex, thus giving elongation factor G a second chance to translocate the tRNAs correctly. Binds to ribosomes in a GTP-dependent manner. The polypeptide is Elongation factor 4 (Phytoplasma mali (strain AT)).